The following is a 456-amino-acid chain: Adenylyltransferase and sulfurtransferase uba4 (456 aa).

ATP contacts are provided by residues G101, D122, 129–133, K146, and 161–162; these read SNLHR and DH. 2 residues coordinate Zn(2+): C210 and C213. Residue C227 is the Glycyl thioester intermediate; for adenylyltransferase activity of the active site. The Zn(2+) site is built by C300 and C303. The 105-residue stretch at 350 to 454 folds into the Rhodanese domain; that stretch reads KEKEHLLIDV…WKEQVDGSWP (105 aa). C409 (cysteine persulfide intermediate; for sulfurtransferase activity) is an active-site residue.

It in the N-terminal section; belongs to the HesA/MoeB/ThiF family. UBA4 subfamily. It depends on Zn(2+) as a cofactor.

It localises to the cytoplasm. The protein resides in the cytosol. It catalyses the reaction [molybdopterin-synthase sulfur-carrier protein]-C-terminal Gly-Gly + ATP + H(+) = [molybdopterin-synthase sulfur-carrier protein]-C-terminal Gly-Gly-AMP + diphosphate. It carries out the reaction [molybdopterin-synthase sulfur-carrier protein]-C-terminal Gly-Gly-AMP + S-sulfanyl-L-cysteinyl-[cysteine desulfurase] + AH2 = [molybdopterin-synthase sulfur-carrier protein]-C-terminal-Gly-aminoethanethioate + L-cysteinyl-[cysteine desulfurase] + A + AMP + 2 H(+). The protein operates within tRNA modification; 5-methoxycarbonylmethyl-2-thiouridine-tRNA biosynthesis. In terms of biological role, plays a central role in 2-thiolation of mcm(5)S(2)U at tRNA wobble positions of cytosolic tRNA(Lys), tRNA(Glu) and tRNA(Gln). Also essential during biosynthesis of the molybdenum cofactor. Acts by mediating the C-terminal thiocarboxylation of sulfur carriers urm1 and mocs2a. Its N-terminus first activates urm1 and mocs2a as acyl-adenylates (-COAMP), then the persulfide sulfur on the catalytic cysteine is transferred to urm1 and mocs2a to form thiocarboxylation (-COSH) of their C-terminus. The reaction probably involves hydrogen sulfide that is generated from the persulfide intermediate and that acts as a nucleophile towards urm1 and mocs2a. Subsequently, a transient disulfide bond is formed. Does not use thiosulfate as sulfur donor; nfs1 probably acting as a sulfur donor for thiocarboxylation reactions. The protein is Adenylyltransferase and sulfurtransferase uba4 of Sclerotinia sclerotiorum (strain ATCC 18683 / 1980 / Ss-1) (White mold).